The following is an 82-amino-acid chain: RNA-binding protein Hfq (82 aa).

Residues Asp9–Val68 enclose the Sm domain.

This sequence belongs to the Hfq family. In terms of assembly, homohexamer.

Its function is as follows. RNA chaperone that binds small regulatory RNA (sRNAs) and mRNAs to facilitate mRNA translational regulation in response to envelope stress, environmental stress and changes in metabolite concentrations. Also binds with high specificity to tRNAs. The protein is RNA-binding protein Hfq of Methylococcus capsulatus (strain ATCC 33009 / NCIMB 11132 / Bath).